The following is a 360-amino-acid chain: MERVYNFSAGPSILPLPVLEKVQKELLNYNGTGMSIMEMSHRSSYFQSIIEEASNLLRELMSIPDEYEVLFLQGGASLQFSMIPLNLMNTYKKAGYVLTGSWSKKALQEAEKVGEVQVIASSEQEKFTTIPKLDGLLSDEKLDYVHITTNNTIEGTKYVDIPHVEKVPLVADMSSNILSERYDVSKFGLIYAGAQKNLGPAGLTIAIIKRDLIGEADRSCPTMLNYETYSKNNSLYNTPPSFSIYVTKLVLEWLKEQGGVSAIEEQNRMKSSLLYNFLDESKLFTSPVDPTYRSLMNIPFTTPSEELNSEFLQKAKERGLVTLKGHRSVGGMRASIYNAMPVQGVQQLVNYMKEFELENR.

Residue Arg-42 participates in L-glutamate binding. Residues 76 to 77, Trp-102, Thr-152, Asp-172, and Gln-195 contribute to the pyridoxal 5'-phosphate site; that span reads AS. Lys-196 carries the N6-(pyridoxal phosphate)lysine modification. 237 to 238 contributes to the pyridoxal 5'-phosphate binding site; that stretch reads NT.

It belongs to the class-V pyridoxal-phosphate-dependent aminotransferase family. SerC subfamily. In terms of assembly, homodimer. The cofactor is pyridoxal 5'-phosphate.

The protein resides in the cytoplasm. It catalyses the reaction O-phospho-L-serine + 2-oxoglutarate = 3-phosphooxypyruvate + L-glutamate. The catalysed reaction is 4-(phosphooxy)-L-threonine + 2-oxoglutarate = (R)-3-hydroxy-2-oxo-4-phosphooxybutanoate + L-glutamate. It participates in amino-acid biosynthesis; L-serine biosynthesis; L-serine from 3-phospho-D-glycerate: step 2/3. Catalyzes the reversible conversion of 3-phosphohydroxypyruvate to phosphoserine and of 3-hydroxy-2-oxo-4-phosphonooxybutanoate to phosphohydroxythreonine. The polypeptide is Phosphoserine aminotransferase (Bacillus cereus (strain ATCC 14579 / DSM 31 / CCUG 7414 / JCM 2152 / NBRC 15305 / NCIMB 9373 / NCTC 2599 / NRRL B-3711)).